Reading from the N-terminus, the 222-residue chain is Transcriptional regulatory protein BasR (222 aa).

The region spanning 2-116 (KILIVEDDTL…ELHARIRALL (115 aa)) is the Response regulatory domain. The residue at position 51 (aspartate 51) is a 4-aspartylphosphate. The segment at residues 124 to 218 (ESELIVGNLT…VRGFGYMLVA (95 aa)) is a DNA-binding region (ompR/PhoB-type).

As to quaternary structure, homodimer. In terms of processing, phosphorylated by BasS.

The protein localises to the cytoplasm. Its function is as follows. Member of the two-component regulatory system BasS/BasR. BasR induces the transcription of the ugd, ais, arnBCADTEF and eptA-basRS loci, all involved in resistance to polymyxin. In Escherichia coli (strain K12), this protein is Transcriptional regulatory protein BasR (basR).